The following is a 461-amino-acid chain: Phosphatidate cytidylyltransferase 1 (461 aa).

Residues 1-68 are disordered; sequence MLELRHRGGC…PEVPPSSDRT (68 aa). Arg7 bears the Omega-N-methylarginine mark. Residues 22 to 56 are compositionally biased toward basic and acidic residues; sequence REGEAAGGDHETESTSDKETDIDDRYGDLDARGDS. 2 positions are modified to phosphoserine: Ser35 and Ser37. Helical transmembrane passes span 96-116, 149-169, 183-203, 230-250, 279-299, and 357-377; these read MISL…LLVL, FLLC…FATF, HRFI…LSLV, LVIQ…SSVI, GFIG…YVLS, and IALS…ASGF.

Belongs to the CDS family. Homodimer. Interacts with FOS; this interaction may enhance catalytic activity. Requires Mg(2+) as cofactor. Brain, retina and testis. Found in cerebellar Purkinje cells, pineal body, inner segment of photoreceptor cells and postmitotic spermatocytes and spermatids.

It is found in the endoplasmic reticulum membrane. It carries out the reaction a 1,2-diacyl-sn-glycero-3-phosphate + CTP + H(+) = a CDP-1,2-diacyl-sn-glycerol + diphosphate. The catalysed reaction is 1-octadecanoyl-2-(5Z,8Z,11Z,14Z-eicosatetraenoyl)-sn-glycero-3-phosphate + CTP + H(+) = 1-octadecanoyl-2-(5Z,8Z,11Z,14Z-eicosatetraenoyl)-sn-glycero-3-cytidine-5'-diphosphate + diphosphate. The enzyme catalyses 1-octadecanoyl-2-(9Z,12Z-octadecadienoyl)-sn-glycero-3-phosphate + CTP + H(+) = 1-octadecanoyl-2-(9Z,12Z-octadecadienoyl)-sn-glycero-3-cytidine-5'-diphosphate + diphosphate. It catalyses the reaction 1-hexadecanoyl-2-(5Z,8Z,11Z,14Z-eicosatetraenoyl)-sn-glycero-3-phosphate + CTP + H(+) = 1-hexadecanoyl-2-(5Z,8Z,11Z,14Z-eicosatetraenoyl)-sn-glycero-3-cytidine-5'-diphosphate + diphosphate. It carries out the reaction 1,2-di-(5Z,8Z,11Z,14Z)-eicosatetraenoyl-sn-glycero-3-phosphate + CTP + H(+) = 1,2-di-(5Z,8Z,11Z,14Z-eicosatetraenoyl)-sn-glycero-3-cytidine-5'-diphosphate + diphosphate. The catalysed reaction is 1-octadecanoyl-2-(9Z-octadecenoyl)-sn-glycero-3-phosphate + CTP + H(+) = 1-octadecanoyl-2-(9Z-octadecenoyl)-sn-glycero-3-cytidine-5'-diphosphate + diphosphate. The enzyme catalyses 1-octadecanoyl-2-(4Z,7Z,10Z,13Z,16Z,19Z-docosahexaenoyl)-sn-glycero-3-phosphate + CTP + H(+) = 1-octadecanoyl-2-(4Z,7Z,10Z,13Z,16Z,19Z-docosahexaenoyl)-sn-glycero-3-cytidine-5'-diphosphate + diphosphate. It catalyses the reaction 1,2-di-(9Z,12Z-octadecadienoyl)-sn-glycero-3-phosphate + CTP + H(+) = 1,2-di-(9Z,12Z-octadecadienoyl)-sn-glycero-3-cytidine-5'-diphosphate + diphosphate. It carries out the reaction 1,2-di-(9Z-octadecenoyl)-sn-glycero-3-phosphate + CTP + H(+) = 1,2-di-(9Z-octadecenoyl)-sn-glycero-3-cytidine-5'-diphosphate + diphosphate. Its pathway is phospholipid metabolism; CDP-diacylglycerol biosynthesis; CDP-diacylglycerol from sn-glycerol 3-phosphate: step 3/3. Its activity is regulated as follows. Activated by GTP. Inhibited by CDP-diacylglycerol and by phosphatidylglycerol 4,5-bisphosphate (PPI2). Its function is as follows. Catalyzes the conversion of phosphatidic acid (PA) to CDP-diacylglycerol (CDP-DAG), an essential intermediate in the synthesis of phosphatidylglycerol, cardiolipin and phosphatidylinositol. Exhibits almost no acyl chain preference for PA, showing no discrimination for the sn-1/sn-2 acyl chain composition of PAs. Plays an important role in regulatinng the growth of lipid droplets which are storage organelles at the center of lipid and energy homeostasis. Positively regulates the differentiation and development of adipocytes. The chain is Phosphatidate cytidylyltransferase 1 from Rattus norvegicus (Rat).